A 290-amino-acid polypeptide reads, in one-letter code: Arylamine N-acetyltransferase 2 (290 aa).

Catalysis depends on Cys68, which acts as the Acyl-thioester intermediate. Residues Ser103 and Gly104 each coordinate CoA. Position 106-107 (106-107 (IH)) interacts with substrate. Active-site residues include His107 and Asp122. Position 208 (Tyr208) interacts with CoA.

Belongs to the arylamine N-acetyltransferase family.

Its subcellular location is the cytoplasm. The enzyme catalyses an arylamine + acetyl-CoA = an N-acetylarylamine + CoA. It carries out the reaction an N-hydroxyarylamine + acetyl-CoA = an N-acetoxyarylamine + CoA. Functionally, catalyzes the N- or O-acetylation of various arylamine and heterocyclic amine substrates, and participates in the detoxification of a plethora of hydrazine and arylamine drugs. This chain is Arylamine N-acetyltransferase 2 (Nat2), found in Mus musculus (Mouse).